Reading from the N-terminus, the 351-residue chain is MSSLSPELYGCLGNSGLKVSKLILGCMSYGKKEYWEDWVLEDEEEVFKIMKAAYDAGIRTFDTANCYSAGVSEELVGKFIRKYEIPRSSIVILSKCFFPVRKDLIKIFGDLSSRGVHFLDSPELANQCGLSRKHIFDAVEDSVKRLGTYIDVLQIHRYDPHVSAEEVMRALNDVVESGKVRYIGASTMRCYQFIELQNTAEKHGWHKFISMQNYHNLLYREEEREMIPYCQKTGVGLIPWSPLARGLLTRSIDANEETIRSKTDLYTRALEFGAGYKAILSRVEELAKKYNVSMATLATAWSLHKGDYPIVGISKVERLKDALAAVELKLSEEDIKYLEEPYCPVPIQGEI.

Ser-113 is subject to Phosphoserine.

The protein belongs to the aldo/keto reductase family. Aldo/keto reductase 2 subfamily.

It localises to the cytoplasm. The protein localises to the nucleus. The chain is Putative aryl-alcohol dehydrogenase C977.14c from Schizosaccharomyces pombe (strain 972 / ATCC 24843) (Fission yeast).